The chain runs to 246 residues: Protein DEHYDRATION-INDUCED 19 homolog 3 (246 aa).

A disordered region spans residues 185 to 230 (ERSKAPVPIPDDTSIHKDTPAQPWESRIDSSLTSEEREQKRKQATD). Over residues 218 to 229 (SEEREQKRKQAT) the composition is skewed to basic and acidic residues.

This sequence belongs to the Di19 family.

This is Protein DEHYDRATION-INDUCED 19 homolog 3 (DI19-3) from Oryza sativa subsp. japonica (Rice).